The following is a 919-amino-acid chain: Aminodeoxychorismate synthase, chloroplastic (919 aa).

Residues 1–45 constitute a chloroplast transit peptide; the sequence is MNMNFSFCSTSSELSYPSENVLRFSVASRLFSPKWKKSFISLPCR. The Glutamine amidotransferase type-1 domain maps to 86–342; it reads RTLLIDNYDS…KDITVNYWSR (257 aa). Residue cysteine 172 is the Nucleophile of the active site. Active-site residues include histidine 316 and glutamate 318. The interval 436-910 is PABB component; sequence IFMELFGKNR…KTRAPANAVM (475 aa).

This sequence in the C-terminal section; belongs to the anthranilate synthase component I family.

Its subcellular location is the plastid. It localises to the chloroplast. It catalyses the reaction chorismate + L-glutamine = 4-amino-4-deoxychorismate + L-glutamate. The protein operates within cofactor biosynthesis; tetrahydrofolate biosynthesis; 4-aminobenzoate from chorismate: step 1/2. With respect to regulation, activated by chorismate and inhibited by dihydrofolate and methotrexate. Bifunctional enzyme that catalyzes the biosynthesis of 4-amino-4-deoxychorismate (ADC) from chorismate and glutamine. In the first step, a glutamine amidotransferase generates ammonia that is channelled between the binding sites of glutamine and chorismate and used along with chorismate in the second step, catalyzed by aminodeoxychorismate synthase, to produce ADC. Required for the synthesis of 4-aminobenzoate (PABA), an important component in tetrahydrofolate biosynthesis. Does not possess ADC lyase activity. The protein is Aminodeoxychorismate synthase, chloroplastic (ADCS) of Arabidopsis thaliana (Mouse-ear cress).